We begin with the raw amino-acid sequence, 695 residues long: Nicastrin (695 aa).

A signal peptide spans 1-22; it reads MEMRLNAASIWLLILSYGATIA. At 23–654 the chain is on the extracellular side; sequence QGERTRDKMY…IFLRPSNVHQ (632 aa). N-linked (GlcNAc...) asparagine glycans are attached at residues N45, N108, N116, N138, N381, N461, N489, N585, and N609. Residues 655-675 form a helical membrane-spanning segment; the sequence is VTTLSVGIVVLIISFCLVYII. Residues 676 to 695 are Cytoplasmic-facing; it reads SSRSEVLFEDLPASNAALFG.

The protein belongs to the nicastrin family. As to quaternary structure, component of the gamma-secretase complex, a complex composed of a presenilin (Psn) homodimer, nicastrin (Nct), Aph-1 and Pen-2.

The protein localises to the membrane. Functionally, essential subunit of the gamma-secretase complex, an endoprotease complex that catalyzes the intramembrane cleavage of integral membrane proteins such as Notch. It probably represents a stabilizing cofactor required for the assembly of the gamma-secretase complex. The polypeptide is Nicastrin (Drosophila melanogaster (Fruit fly)).